We begin with the raw amino-acid sequence, 317 residues long: Acetyl-coenzyme A carboxylase carboxyl transferase subunit beta (317 aa).

The interval 1-28 (MANNMTDTMTKFDTNNDSASLQQNGNKA) is disordered. The CoA carboxyltransferase N-terminal domain maps to 55–317 (PSTKCSSCHS…LCSVPNVDAQ (263 aa)). 4 residues coordinate Zn(2+): C59, C62, C78, and C81. The segment at 59 to 81 (CSSCHSVITNTALIFNCYVCPHC) adopts a C4-type zinc-finger fold.

It belongs to the AccD/PCCB family. Acetyl-CoA carboxylase is a heterohexamer composed of biotin carboxyl carrier protein (AccB), biotin carboxylase (AccC) and two subunits each of ACCase subunit alpha (AccA) and ACCase subunit beta (AccD). Requires Zn(2+) as cofactor.

Its subcellular location is the cytoplasm. The catalysed reaction is N(6)-carboxybiotinyl-L-lysyl-[protein] + acetyl-CoA = N(6)-biotinyl-L-lysyl-[protein] + malonyl-CoA. Its pathway is lipid metabolism; malonyl-CoA biosynthesis; malonyl-CoA from acetyl-CoA: step 1/1. Its function is as follows. Component of the acetyl coenzyme A carboxylase (ACC) complex. Biotin carboxylase (BC) catalyzes the carboxylation of biotin on its carrier protein (BCCP) and then the CO(2) group is transferred by the transcarboxylase to acetyl-CoA to form malonyl-CoA. In Psychrobacter arcticus (strain DSM 17307 / VKM B-2377 / 273-4), this protein is Acetyl-coenzyme A carboxylase carboxyl transferase subunit beta.